Consider the following 356-residue polypeptide: Mannonate dehydratase 2 (356 aa).

This sequence belongs to the mannonate dehydratase family. The cofactor is Fe(2+). Requires Mn(2+) as cofactor.

It carries out the reaction D-mannonate = 2-dehydro-3-deoxy-D-gluconate + H2O. The protein operates within carbohydrate metabolism; pentose and glucuronate interconversion. Catalyzes the dehydration of D-mannonate. This chain is Mannonate dehydratase 2, found in Bacillus licheniformis (strain ATCC 14580 / DSM 13 / JCM 2505 / CCUG 7422 / NBRC 12200 / NCIMB 9375 / NCTC 10341 / NRRL NRS-1264 / Gibson 46).